A 224-amino-acid chain; its full sequence is Endonuclease NucS (224 aa).

The protein belongs to the NucS endonuclease family.

The protein localises to the cytoplasm. In terms of biological role, cleaves both 3' and 5' ssDNA extremities of branched DNA structures. This Rhodococcus jostii (strain RHA1) protein is Endonuclease NucS.